Reading from the N-terminus, the 324-residue chain is Short chain dehydrogenase/reductase dmxR8 (324 aa).

NADP(+) contacts are provided by leucine 33, lysine 58, aspartate 83, and asparagine 110. Serine 163 serves as the catalytic Proton donor. NADP(+) is bound by residues tyrosine 200 and lysine 204. The active-site Proton acceptor is the tyrosine 200. The Lowers pKa of active site Tyr role is filled by lysine 204.

Belongs to the short-chain dehydrogenases/reductases (SDR) family.

Its pathway is secondary metabolite biosynthesis. In terms of biological role, short chain dehydrogenase; part of the gene cluster that mediates the biosynthesis of the dimeric xanthones cryptosporioptides. The pathway begins with the synthesis of atrochrysone thioester by the polyketide synthase dmx-nrPKS. The atrochrysone carboxyl ACP thioesterase dmxR1 then breaks the thioester bond and releases the atrochrysone carboxylic acid from dmx-nrPKS. Atrochrysone carboxylic acid is decarboxylated by the decarboxylase dmxR15, and oxidized by the anthrone oxygenase dmxR16 to yield emodin. Emodin is then reduced to emodin hydroquinone by the oxidoreductase dmxR7. A-ring reduction by the short chain dehydrogenase dmxR18, dehydration by the scytalone dehydratase-like protein dmxR17 and probable spontaneous re-oxidation, results in overall deoxygenation to chrysophanol. Baeyer-Villiger oxidation by the Baeyer-Villiger monooxygenase (BVMO) dmxR6 then yields monodictylactone in equilibrium with monodictyphenone. In the case of the cryptosporioptides biosynthesis, monodictylactone is reduced at C-12 to an alcohol (by the short chain dehydrogenases dmxR12 or dmxR8) and hydroxylated at C-5 by dmxR9, yielding the electron-rich aromatic which could eliminate H(2)O to form the ortho-quinonemethide, followed by tautomerisation to paraquinone and complete the formal reduction to produce the 10-methylgroup. Conjugate addition of C-4a-OH to the resulting paraquinone by the monooxygenase dmxR10 then gives cyclohexadienone, which is then reduced at C-5 by the short chain dehydrogenase dmxR3 to give the dihydroxanthone. The 6,7-epoxide in the cryptosporioptides could be introduced by the cytochrome P450 monooxygenase dmxL3. The highly reducing PKS dmxL2 manufactures butyrate, which is further carboxylated by dmxL1 to form ethylmalonate. It is not yet clear whether the carboxylation occurs while the butyrate is attached to the ACP of dmxL2, but this unusual fungal metabolite could then be esterified to O-5 by the O-acetyltransferase dmxR13. Finally, dimerization performed by dmxR5 gives the observed dimers cryptosporioptides A, B and C as the final products of the pathway. The protein is Short chain dehydrogenase/reductase dmxR8 of Cryptosporiopsis sp. (strain 8999).